Reading from the N-terminus, the 445-residue chain is Glucose-6-phosphate isomerase 2 (445 aa).

The active-site Proton donor is Glu285. Catalysis depends on residues His306 and Lys420.

It belongs to the GPI family. As to quaternary structure, homodimer.

It is found in the cytoplasm. The enzyme catalyses alpha-D-glucose 6-phosphate = beta-D-fructose 6-phosphate. It participates in carbohydrate biosynthesis; gluconeogenesis. The protein operates within carbohydrate degradation; glycolysis; D-glyceraldehyde 3-phosphate and glycerone phosphate from D-glucose: step 2/4. Catalyzes the reversible isomerization of glucose-6-phosphate to fructose-6-phosphate. The protein is Glucose-6-phosphate isomerase 2 of Geobacillus stearothermophilus (Bacillus stearothermophilus).